Reading from the N-terminus, the 391-residue chain is Ferrochelatase (391 aa).

Fe cation contacts are provided by histidine 196 and glutamate 281.

This sequence belongs to the ferrochelatase family.

The protein resides in the cytoplasm. The enzyme catalyses heme b + 2 H(+) = protoporphyrin IX + Fe(2+). It participates in porphyrin-containing compound metabolism; protoheme biosynthesis; protoheme from protoporphyrin-IX: step 1/1. In terms of biological role, catalyzes the ferrous insertion into protoporphyrin IX. In Prochlorococcus marinus (strain NATL2A), this protein is Ferrochelatase.